The chain runs to 106 residues: Small ribosomal subunit protein bS16 (106 aa).

The interval 84-106 (KREARNNPEKAVPRKERKAADGK) is disordered.

The polypeptide is Small ribosomal subunit protein bS16 (Rhodopseudomonas palustris (strain ATCC BAA-98 / CGA009)).